Reading from the N-terminus, the 635-residue chain is Early transcription factor 70 kDa subunit (635 aa).

The region spanning 32–185 (RSIIDENKSV…SNIISLMSDE (154 aa)) is the Helicase ATP-binding domain. 45-52 (HIMGSGKT) contributes to the ATP binding site. The DEXH box motif lies at 135-138 (DEAH). The Helicase C-terminal domain occupies 326–505 (KFKYFINKIE…TLPFDIKKLL (180 aa)).

The protein belongs to the helicase family. VETF subfamily. As to quaternary structure, heterodimer of a 70 kDa and a 82 kDa subunit. Part of the early transcription complex composed of ETF, RAP94, and the DNA-directed RNA polymerase.

Its subcellular location is the virion. In terms of biological role, acts with RNA polymerase to initiate transcription from early gene promoters. Is recruited by the RPO-associated protein of 94 kDa (RAP94) to form the early transcription complex, which also contains the core RNA polymerase. ETF heterodimer binds to early gene promoters. This chain is Early transcription factor 70 kDa subunit (VETFS), found in Oryctolagus cuniculus (Rabbit).